The following is a 346-amino-acid chain: uncharacterized protein (346 aa).

It belongs to the PhyH family.

It is found in the cytoplasm. This is an uncharacterized protein from Saccharomyces cerevisiae (strain ATCC 204508 / S288c) (Baker's yeast).